The sequence spans 1290 residues: Vacuolating cytotoxin autotransporter (1290 aa).

The signal sequence occupies residues 1–33 (MEIQQTHRKINRPLVSLALVGALVSITPQQSHA). Residues 326–374 (PPEGGYKDKPKDKPSNTTQNNANNNQQNSAQNNSNTQVINPPNSAQKTE) form a disordered region. Positions 330-339 (GYKDKPKDKP) are enriched in basic and acidic residues. The span at 340–362 (SNTTQNNANNNQQNSAQNNSNTQ) shows a compositional bias: low complexity. Residues 363–374 (VINPPNSAQKTE) show a composition bias toward polar residues. The Autotransporter domain maps to 1018-1290 (KYEKPTNVWA…ASNLGMRYSF (273 aa)).

It is found in the periplasm. Its subcellular location is the secreted. The protein resides in the cell surface. The protein localises to the cell outer membrane. Induces vacuolation of eukaryotic cells. Causes ulceration and gastric lesions. The chain is Vacuolating cytotoxin autotransporter (vacA) from Helicobacter pylori (strain ATCC 700392 / 26695) (Campylobacter pylori).